Reading from the N-terminus, the 151-residue chain is Ubiquitin-conjugating enzyme E2-17 kDa (151 aa).

The 147-residue stretch at 4–150 (PARRRLMRDF…VKACVEQSFI (147 aa)) folds into the UBC core domain. The active-site Glycyl thioester intermediate is the Cys88.

Belongs to the ubiquitin-conjugating enzyme family.

The protein localises to the nucleus. It carries out the reaction S-ubiquitinyl-[E1 ubiquitin-activating enzyme]-L-cysteine + [E2 ubiquitin-conjugating enzyme]-L-cysteine = [E1 ubiquitin-activating enzyme]-L-cysteine + S-ubiquitinyl-[E2 ubiquitin-conjugating enzyme]-L-cysteine.. The protein operates within protein modification; protein ubiquitination. E2 ubiquitin-conjugating enzyme that accepts ubiquitin from the ubiquitin-activating enzyme E1 and transfers it to a E3 ubiquitin-protein ligase. Required for postreplication repair of UV-damaged DNA. Involved in the negative regulation of the Ras/MAPK signaling pathway in the wing by acting with the putative E3 ligases poe, Kcmf1 and Ufd4 to mediate the ubiquitination and proteasomal degradation of rl/MAPK. Required for in mitophagy. The protein is Ubiquitin-conjugating enzyme E2-17 kDa of Drosophila melanogaster (Fruit fly).